Consider the following 434-residue polypeptide: Serine protease HTRA2, mitochondrial (434 aa).

The tract at residues 34 to 65 (YSNNTANITTDSSSSSNNNSNRNNKNDNNNED) is disordered. Over residues 35–60 (SNNTANITTDSSSSSNNNSNRNNKND) the composition is skewed to low complexity. Residues 74–92 (LVRFFVPFSLGAVASSLVM) form a helical membrane-spanning segment. The IAP-binding motif lies at 85–88 (AVAS). The segment at 151 to 314 (SNGSGFVIEQ…IPIDYVKVFL (164 aa)) is serine protease. Catalysis depends on charge relay system residues H169, D201, and S278. Positions 337 to 424 (MGITMLTLTP…NMIIMRGVKQ (88 aa)) constitute a PDZ domain.

The protein belongs to the peptidase S1C family. Interacts with th/DIAP1 (via BIR 2 domain).

It is found in the mitochondrion intermembrane space. The protein resides in the mitochondrion membrane. The catalysed reaction is Cleavage of non-polar aliphatic amino-acids at the P1 position, with a preference for Val, Ile and Met. At the P2 and P3 positions, Arg is selected most strongly with a secondary preference for other hydrophilic residues.. Its function is as follows. Serine protease that shows proteolytic activity against a non-specific substrate beta-casein. Promotes or induces cell death either by direct binding to and inhibition of BIRC proteins (also called inhibitor of apoptosis proteins, IAPs), leading to an increase in caspase activity, or by a BIRC inhibition-independent, caspase-independent and serine protease activity-dependent mechanism. Can antagonize antiapoptotic activity of th/Diap1 by directly inducing the degradation of th/Diap1. In Drosophila willistoni (Fruit fly), this protein is Serine protease HTRA2, mitochondrial.